A 145-amino-acid polypeptide reads, in one-letter code: Large ribosomal subunit protein uL15 (145 aa).

Residues 1-58 form a disordered region; sequence MKLHELSPSEGSRKKRKRVGRGPGSGMGGTSTRGNKGHNQRSGGGTRPGFEGGQMPLH. Composition is skewed to gly residues over residues 21–31 and 42–52; these read RGPGSGMGGTS and SGGGTRPGFEG.

This sequence belongs to the universal ribosomal protein uL15 family. In terms of assembly, part of the 50S ribosomal subunit.

Functionally, binds to the 23S rRNA. The chain is Large ribosomal subunit protein uL15 from Desulforapulum autotrophicum (strain ATCC 43914 / DSM 3382 / VKM B-1955 / HRM2) (Desulfobacterium autotrophicum).